We begin with the raw amino-acid sequence, 494 residues long: Probable cytosol aminopeptidase (494 aa).

Positions 260 and 265 each coordinate Mn(2+). Lys272 is an active-site residue. Mn(2+)-binding residues include Asp283, Asp342, and Glu344. Arg346 is a catalytic residue.

This sequence belongs to the peptidase M17 family. The cofactor is Mn(2+).

It is found in the cytoplasm. The enzyme catalyses Release of an N-terminal amino acid, Xaa-|-Yaa-, in which Xaa is preferably Leu, but may be other amino acids including Pro although not Arg or Lys, and Yaa may be Pro. Amino acid amides and methyl esters are also readily hydrolyzed, but rates on arylamides are exceedingly low.. It carries out the reaction Release of an N-terminal amino acid, preferentially leucine, but not glutamic or aspartic acids.. Functionally, presumably involved in the processing and regular turnover of intracellular proteins. Catalyzes the removal of unsubstituted N-terminal amino acids from various peptides. In Bacillus cereus (strain B4264), this protein is Probable cytosol aminopeptidase.